The following is a 212-amino-acid chain: Peptide methionine sulfoxide reductase MsrA (212 aa).

The active site involves Cys-52.

The protein belongs to the MsrA Met sulfoxide reductase family.

It catalyses the reaction L-methionyl-[protein] + [thioredoxin]-disulfide + H2O = L-methionyl-(S)-S-oxide-[protein] + [thioredoxin]-dithiol. The enzyme catalyses [thioredoxin]-disulfide + L-methionine + H2O = L-methionine (S)-S-oxide + [thioredoxin]-dithiol. In terms of biological role, has an important function as a repair enzyme for proteins that have been inactivated by oxidation. Catalyzes the reversible oxidation-reduction of methionine sulfoxide in proteins to methionine. The protein is Peptide methionine sulfoxide reductase MsrA of Salmonella choleraesuis (strain SC-B67).